The following is a 174-amino-acid chain: dCTP deaminase, dUMP-forming (174 aa).

Residues 93–98 (RSSIGR), Asp111, 119–121 (TLE), Gln138, and Tyr151 each bind dCTP. Residue Glu121 is the Proton donor/acceptor of the active site.

This sequence belongs to the dCTP deaminase family. In terms of assembly, homotrimer.

It catalyses the reaction dCTP + 2 H2O = dUMP + NH4(+) + diphosphate. It participates in pyrimidine metabolism; dUMP biosynthesis; dUMP from dCTP: step 1/1. Functionally, bifunctional enzyme that catalyzes both the deamination of dCTP to dUTP and the hydrolysis of dUTP to dUMP without releasing the toxic dUTP intermediate. The protein is dCTP deaminase, dUMP-forming of Leptospira biflexa serovar Patoc (strain Patoc 1 / Ames).